Reading from the N-terminus, the 103-residue chain is Large ribosomal subunit protein bL21 (103 aa).

Belongs to the bacterial ribosomal protein bL21 family. As to quaternary structure, part of the 50S ribosomal subunit. Contacts protein L20.

Functionally, this protein binds to 23S rRNA in the presence of protein L20. This chain is Large ribosomal subunit protein bL21, found in Psychromonas ingrahamii (strain DSM 17664 / CCUG 51855 / 37).